The following is a 311-amino-acid chain: Putative dihydroorotate dehydrogenase A (fumarate) (311 aa).

Substrate-binding positions include lysine 45, 69 to 73 (NSMGL), and asparagine 128. 45 to 46 (KT) contributes to the FMN binding site. An FMN-binding site is contributed by asparagine 128. Cysteine 131 (nucleophile) is an active-site residue. 2 residues coordinate FMN: lysine 165 and valine 193. Residue 194–195 (NS) participates in substrate binding. Residues glycine 220, 248–249 (GG), and 270–271 (GT) contribute to the FMN site.

It belongs to the dihydroorotate dehydrogenase family. Type 1 subfamily. As to quaternary structure, homodimer. Requires FMN as cofactor.

It is found in the cytoplasm. It carries out the reaction (S)-dihydroorotate + fumarate = orotate + succinate. It functions in the pathway pyrimidine metabolism; UMP biosynthesis via de novo pathway. Its function is as follows. Catalyzes the conversion of dihydroorotate to orotate with fumarate as the electron acceptor. The chain is Putative dihydroorotate dehydrogenase A (fumarate) (pyrD) from Streptococcus uberis (strain ATCC BAA-854 / 0140J).